The sequence spans 397 residues: uncharacterized protein (397 aa).

Residues Ser-115 and Ser-141 each carry the phosphoserine modification. The tract at residues 135–156 is disordered; that stretch reads NSLNHDSPPHTPARRSDNSTSK. A Glycyl lysine isopeptide (Lys-Gly) (interchain with G-Cter in SUMO2) cross-link involves residue Lys-239. Phosphoserine occurs at positions 269 and 296. The interval 289–316 is disordered; that stretch reads GRGPTKASPQPALTVKAKATSSATTLAS. A compositionally biased stretch (low complexity) spans 300–316; that stretch reads ALTVKAKATSSATTLAS. A Phosphoserine modification is found at Ser-342. The tract at residues 354-397 is disordered; the sequence is SEAQDSQVTSTKSPTVRCIVPDPPAPLASQRPPRRRWRRTCKDC. Polar residues predominate over residues 356–367; that stretch reads AQDSQVTSTKSP. Basic residues predominate over residues 385 to 397; that stretch reads PPRRRWRRTCKDC.

This is an uncharacterized protein from Rattus norvegicus (Rat).